The primary structure comprises 385 residues: MTATTAESGNLLPLVSGRSRPPRHLADLSRDERRAVATSLGLPAFRADQLARHYFTHHLRADDADLMTDLPASIRPALVEAMLPRLLTPATALDCDGGQTRKTVWRTVDGAKIESVLMRYPQRATVCVSSQAGCGMGCPFCATGQGGLTRNLSTAEIVEQVVDAARTMAARTTAEGGLPGGPGRLSNVVFMGMGEPLANYAALLAALHRLIDPAPDGLGLSARGLTVSTVGLVPAIRRLAGEGLPVTLAVSLHAPDDELRDELVPINTRWPVAEVLAAAWEYARVTGRRVSIEYALIDGVNDSPERADALAALLVGQLAHVNLIPLNPTGGSSWQASAPRGQRVFVERLRARGVAATVRDTRGREIAAACGQLAAEPPVRSRAGR.

Residues 1–24 form a disordered region; it reads MTATTAESGNLLPLVSGRSRPPRH. Catalysis depends on glutamate 114, which acts as the Proton acceptor. A Radical SAM core domain is found at 120–364; that stretch reads YPQRATVCVS…AATVRDTRGR (245 aa). A disulfide bridge links cysteine 127 with cysteine 370. 3 residues coordinate [4Fe-4S] cluster: cysteine 134, cysteine 138, and cysteine 141. Residues 194–195, serine 228, 251–253, and asparagine 327 contribute to the S-adenosyl-L-methionine site; these read GE and SLH. The S-methylcysteine intermediate role is filled by cysteine 370.

It belongs to the radical SAM superfamily. RlmN family. [4Fe-4S] cluster is required as a cofactor.

It localises to the cytoplasm. It carries out the reaction adenosine(2503) in 23S rRNA + 2 reduced [2Fe-2S]-[ferredoxin] + 2 S-adenosyl-L-methionine = 2-methyladenosine(2503) in 23S rRNA + 5'-deoxyadenosine + L-methionine + 2 oxidized [2Fe-2S]-[ferredoxin] + S-adenosyl-L-homocysteine. The enzyme catalyses adenosine(37) in tRNA + 2 reduced [2Fe-2S]-[ferredoxin] + 2 S-adenosyl-L-methionine = 2-methyladenosine(37) in tRNA + 5'-deoxyadenosine + L-methionine + 2 oxidized [2Fe-2S]-[ferredoxin] + S-adenosyl-L-homocysteine. Functionally, specifically methylates position 2 of adenine 2503 in 23S rRNA and position 2 of adenine 37 in tRNAs. The sequence is that of Probable dual-specificity RNA methyltransferase RlmN from Parafrankia sp. (strain EAN1pec).